An 888-amino-acid polypeptide reads, in one-letter code: Alanine--tRNA ligase (888 aa).

Zn(2+) contacts are provided by His573, His577, Cys676, and His680.

This sequence belongs to the class-II aminoacyl-tRNA synthetase family. Zn(2+) serves as cofactor.

Its subcellular location is the cytoplasm. It carries out the reaction tRNA(Ala) + L-alanine + ATP = L-alanyl-tRNA(Ala) + AMP + diphosphate. Catalyzes the attachment of alanine to tRNA(Ala) in a two-step reaction: alanine is first activated by ATP to form Ala-AMP and then transferred to the acceptor end of tRNA(Ala). Also edits incorrectly charged Ser-tRNA(Ala) and Gly-tRNA(Ala) via its editing domain. This is Alanine--tRNA ligase from Corynebacterium glutamicum (strain ATCC 13032 / DSM 20300 / JCM 1318 / BCRC 11384 / CCUG 27702 / LMG 3730 / NBRC 12168 / NCIMB 10025 / NRRL B-2784 / 534).